The chain runs to 725 residues: Protein ECM27 (725 aa).

A run of 12 helical transmembrane segments spans residues 21 to 41 (VTFI…LGIC), 119 to 139 (VLGA…IIMS), 157 to 177 (LLFS…NQVT), 178 to 198 (VLNC…KLTF), 397 to 417 (ISDA…KLSC), 439 to 459 (LPII…CSIL), 470 to 490 (LVYL…TAFI), 526 to 546 (IQII…SLLA), 559 to 579 (ILGL…NSVG), 621 to 641 (LNSM…IGAF), 668 to 688 (FIVS…FFGG), and 704 to 724 (GISM…LELF).

It belongs to the Ca(2+):cation antiporter (CaCA) (TC 2.A.19) family.

The protein localises to the membrane. This is Protein ECM27 (ECM27) from Saccharomyces cerevisiae (strain ATCC 204508 / S288c) (Baker's yeast).